Reading from the N-terminus, the 215-residue chain is Eukaryotic translation initiation factor 4E-1A (215 aa).

Positions Met1–Asn14 are enriched in low complexity. The tract at residues Met1–Glu23 is disordered. Residues Trp54–Gln55, Trp100–Glu101, Arg155–Lys160, and Thr203–Ser205 contribute to the mRNA site.

It belongs to the eukaryotic initiation factor 4E family. In terms of assembly, interacts with eif4ebp3l. Expressed in all tissues examined, including gill, fin, heart, intestine, muscle, ovary and testis.

Its subcellular location is the cytoplasm. The protein localises to the nucleus. Functionally, recognizes and binds the 7-methylguanosine (m7G)-containing mRNA cap during an early step in the initiation of protein synthesis and facilitates ribosome binding by inducing the unwinding of the mRNAs secondary structures. Also promotes export of a subset of mRNAs from the nucleus to the cytoplasm. In Danio rerio (Zebrafish), this protein is Eukaryotic translation initiation factor 4E-1A.